A 195-amino-acid chain; its full sequence is Thymidine kinase (195 aa).

ATP-binding positions include 9–16 (STMNAGKS) and 87–90 (DEAQ). The Proton acceptor role is filled by Glu88. 4 residues coordinate Zn(2+): Cys145, Cys147, Cys182, and His185.

This sequence belongs to the thymidine kinase family. Homotetramer.

It localises to the cytoplasm. The enzyme catalyses thymidine + ATP = dTMP + ADP + H(+). The sequence is that of Thymidine kinase from Mannheimia succiniciproducens (strain KCTC 0769BP / MBEL55E).